Consider the following 349-residue polypeptide: Protein O-mannose kinase (349 aa).

The Cytoplasmic portion of the chain corresponds to 1–19 (MGQQHGTRNGLTHRELPRG). Residues 20–42 (VGLLLAMALMNVALYLCLDQLFI) traverse the membrane as a helical; Signal-anchor for type II membrane protein segment. Over 43–349 (SPGRSTADSR…TVMSQTKEML (307 aa)) the chain is Lumenal. Residues N66, N164, and N219 are each glycosylated (N-linked (GlcNAc...) asparagine). Positions 80-349 (VRQLKRVGEG…TVMSQTKEML (270 aa)) constitute a Protein kinase domain.

The protein belongs to the protein kinase superfamily. Ser/Thr protein kinase family. STKL subfamily.

The protein localises to the endoplasmic reticulum membrane. The enzyme catalyses 3-O-[beta-D-GalNAc-(1-&gt;3)-beta-D-GlcNAc-(1-&gt;4)-alpha-D-Man]-L-Thr-[protein] + ATP = 3-O-[beta-D-GalNAc-(1-&gt;3)-beta-D-GlcNAc-(1-&gt;4)-(O-6-P-alpha-D-Man)]-Thr-[protein] + ADP + H(+). In terms of biological role, protein O-mannose kinase that specifically mediates phosphorylation at the 6-position of an O-mannose of the trisaccharide (N-acetylgalactosamine (GalNAc)-beta-1,3-N-acetylglucosamine (GlcNAc)-beta-1,4-mannose) to generate phosphorylated O-mannosyl trisaccharide (N-acetylgalactosamine-beta-1,3-N-acetylglucosamine-beta-1,4-(phosphate-6-)mannose). Phosphorylated O-mannosyl trisaccharide is a carbohydrate structure present in alpha-dystroglycan (DAG1), which is required for binding laminin G-like domain-containing extracellular proteins with high affinity. Only shows kinase activity when the GalNAc-beta-3-GlcNAc-beta-terminus is linked to the 4-position of O-mannose, suggesting that this disaccharide serves as the substrate recognition motif. The chain is Protein O-mannose kinase (Pomk) from Mus musculus (Mouse).